We begin with the raw amino-acid sequence, 95 residues long: DNA-directed RNA polymerase subunit Rpo6 (95 aa).

This sequence belongs to the archaeal Rpo6/eukaryotic RPB6 RNA polymerase subunit family. In terms of assembly, part of the 13-subunit RNA polymerase complex.

It localises to the cytoplasm. It catalyses the reaction RNA(n) + a ribonucleoside 5'-triphosphate = RNA(n+1) + diphosphate. Functionally, DNA-dependent RNA polymerase (RNAP) catalyzes the transcription of DNA into RNA using the four ribonucleoside triphosphates as substrates. In Saccharolobus solfataricus (strain ATCC 35092 / DSM 1617 / JCM 11322 / P2) (Sulfolobus solfataricus), this protein is DNA-directed RNA polymerase subunit Rpo6.